The following is a 145-amino-acid chain: Large ribosomal subunit protein uL11 (145 aa).

The protein belongs to the universal ribosomal protein uL11 family. In terms of assembly, part of the ribosomal stalk of the 50S ribosomal subunit. Interacts with L10 and the large rRNA to form the base of the stalk. L10 forms an elongated spine to which L12 dimers bind in a sequential fashion forming a multimeric L10(L12)X complex. One or more lysine residues are methylated.

In terms of biological role, forms part of the ribosomal stalk which helps the ribosome interact with GTP-bound translation factors. The polypeptide is Large ribosomal subunit protein uL11 (Francisella philomiragia subsp. philomiragia (strain ATCC 25017 / CCUG 19701 / FSC 153 / O#319-036)).